A 201-amino-acid chain; its full sequence is UPF0177 protein YajF (201 aa).

Transmembrane regions (helical) follow at residues 10 to 30 (TVILALFLLFLSQVPLYYVEY), 44 to 64 (ITVNFILIGLLIILIAIMLGI), 82 to 102 (ILILILIIPSVALDILFSQFI), 119 to 139 (VMGSLLWFGKILGVALLAPIL), and 159 to 179 (FVFSSLLFTFMHSGYSWVFLI).

Belongs to the UPF0177 family.

Its subcellular location is the cell membrane. The sequence is that of UPF0177 protein YajF (yajF) from Lactococcus lactis subsp. lactis (strain IL1403) (Streptococcus lactis).